The chain runs to 252 residues: Type I iodothyronine deiodinase (252 aa).

Residues 1 to 17 (MESLLQTIKLMLRYIQK) lie on the Extracellular side of the membrane. Residues 18-38 (ALILFFLFLYVVVGKVLMFLF) traverse the membrane as a helical; Signal-anchor for type III membrane protein segment. At 39–252 (PQTMASVLKS…EVCSVLEKKK (214 aa)) the chain is on the cytoplasmic side. The active site involves Sec130. Sec130 is a non-standard amino acid (selenocysteine).

Belongs to the iodothyronine deiodinase family. As to quaternary structure, predominantly monomer. Can form homodimers but homodimerization is not essential for enzyme activity.

It is found in the cell membrane. Its subcellular location is the endoplasmic reticulum membrane. The protein resides in the basolateral cell membrane. The enzyme catalyses 3,3',5-triiodo-L-thyronine + iodide + A + H(+) = L-thyroxine + AH2. It catalyses the reaction 3,3',5'-triiodo-L-thyronine + iodide + A + H(+) = L-thyroxine + AH2. The catalysed reaction is 3,3'-diiodo-L-thyronine + iodide + A + H(+) = 3,3',5'-triiodo-L-thyronine + AH2. It carries out the reaction 3,3'-diiodo-L-thyronine + iodide + A + H(+) = 3,3',5-triiodo-L-thyronine + AH2. The enzyme catalyses 3'-iodo-L-thyronine + iodide + A + H(+) = 3',5'-diiodo-L-thyronine + AH2. It catalyses the reaction 3-iodo-L-thyronine + iodide + A + H(+) = 3,5-diiodo-L-thyronine + AH2. The catalysed reaction is 3-iodo-L-thyronine + iodide + A + H(+) = 3,3'-diiodo-L-thyronine + AH2. It carries out the reaction 3,3'-diiodothyronamine + iodide + A + H(+) = 3,3',5'-triiodothyronamine + AH2. The enzyme catalyses 3'-iodothyronamine + iodide + A + H(+) = 3',5'-diiodothyronamine + AH2. It catalyses the reaction 3-iodothyronamine + iodide + A + H(+) = 3,3'-diiodothyronamine + AH2. The catalysed reaction is 3,3'-diiodothyronamine + iodide + A + H(+) = 3,3',5-triiodothyronamine + AH2. It carries out the reaction 3-iodothyronamine + iodide + A + H(+) = 3,5-diiodothyronamine + AH2. The enzyme catalyses 3,3'-diiodo-L-thyronine sulfate + iodide + A + H(+) = 3,3',5'-triiodo-L-thyronine sulfate + AH2. It catalyses the reaction 3,3',5'-triiodo-L-thyronine sulfate + iodide + A + H(+) = L-thyroxine sulfate + AH2. The catalysed reaction is 3,3'-diiodo-L-thyronine sulfate + iodide + A + H(+) = 3,3',5-triiodo-L-thyronine sulfate + AH2. Its activity is regulated as follows. Lacks sensitivity to 6-n-propylthiouracil. In terms of biological role, plays a crucial role in the metabolism of thyroid hormones (TH) and has specific roles in TH activation and inactivation by deiodination. Catalyzes the deiodination of L-thyroxine (T4) to 3,5,3'-triiodothyronine (T3) and 3,3',5'-triiodothyronine (rT3) to 3,3'-diiodothyronine (3,3'-T2) via outer-ring deiodination (ORD). Catalyzes the deiodiantion of T4 to rT3 and T3 to 3,3'-T2 via inner-ring deiodination (IRD). Catalyzes the deiodination of 3',5'-diiodothyronine (3',5'-T2) to 3'-monoiodothyronine (3'-T1) via ORD. Catalyzes the deiodination of 3,5-diiodothyronine (3,5-T2) to 3-monoiodothyronine (3-T1) and 3,3'-T2 to 3-T1 via IRD. Catalyzes the phenolic ring deiodinations of 3,3',5'-triiodothyronamine, 3',5'-diiodothyronamine and 3,3'-diiodothyronamine as well as tyrosyl ring deiodinations of 3,5,3'-triiodothyronamine and 3,5-diiodothyronamine. Catalyzes the deiodination of L-thyroxine sulfate and 3,3',5-triiodo-L-thyronine sulfate via IRD and of 3,3',5'-triiodo-L-thyronine sulfate via ORD. In Xenopus laevis (African clawed frog), this protein is Type I iodothyronine deiodinase (dio1).